We begin with the raw amino-acid sequence, 357 residues long: 3-isopropylmalate dehydrogenase (357 aa).

Gly-77 to Glu-90 contacts NAD(+). Arg-97, Arg-107, Arg-136, and Asp-224 together coordinate substrate. Mg(2+)-binding residues include Asp-224, Asp-248, and Asp-252. Gly-282–Asn-294 contributes to the NAD(+) binding site.

Belongs to the isocitrate and isopropylmalate dehydrogenases family. LeuB type 1 subfamily. As to quaternary structure, homodimer. Mg(2+) serves as cofactor. The cofactor is Mn(2+).

The protein resides in the cytoplasm. It carries out the reaction (2R,3S)-3-isopropylmalate + NAD(+) = 4-methyl-2-oxopentanoate + CO2 + NADH. It functions in the pathway amino-acid biosynthesis; L-leucine biosynthesis; L-leucine from 3-methyl-2-oxobutanoate: step 3/4. Its function is as follows. Catalyzes the oxidation of 3-carboxy-2-hydroxy-4-methylpentanoate (3-isopropylmalate) to 3-carboxy-4-methyl-2-oxopentanoate. The product decarboxylates to 4-methyl-2 oxopentanoate. This is 3-isopropylmalate dehydrogenase (leuB) from Clostridium pasteurianum.